Reading from the N-terminus, the 213-residue chain is Flagellar transcriptional regulator FlhC (213 aa).

Zn(2+)-binding residues include C138, C141, C158, and C161.

It belongs to the FlhC family. In terms of assembly, heterohexamer composed of two FlhC and four FlhD subunits. Each FlhC binds a FlhD dimer, forming a heterotrimer, and a hexamer assembles by dimerization of two heterotrimers. Zn(2+) is required as a cofactor.

It localises to the cytoplasm. Functions in complex with FlhD as a master transcriptional regulator that regulates transcription of several flagellar and non-flagellar operons by binding to their promoter region. Activates expression of class 2 flagellar genes, including fliA, which is a flagellum-specific sigma factor that turns on the class 3 genes. Also regulates genes whose products function in a variety of physiological pathways. The chain is Flagellar transcriptional regulator FlhC from Cupriavidus metallidurans (strain ATCC 43123 / DSM 2839 / NBRC 102507 / CH34) (Ralstonia metallidurans).